Here is a 43-residue protein sequence, read N- to C-terminus: Oxygen-evolving enhancer protein 2 (43 aa).

This sequence belongs to the PsbP family.

The protein resides in the plastid. It is found in the chloroplast thylakoid membrane. Its function is as follows. May be involved in the regulation of photosystem II. The polypeptide is Oxygen-evolving enhancer protein 2 (Physcomitrium patens (Spreading-leaved earth moss)).